Reading from the N-terminus, the 678-residue chain is RAS guanyl-releasing protein 4 (678 aa).

Basic residues-rich tracts occupy residues 1-10 (MNRKDIKRKS) and 20-32 (GHGR…RHKT). 2 disordered regions span residues 1–33 (MNRK…HKTC) and 165–185 (GDAS…MSSP). Residues 49–175 (GVLSESSCSV…DASNLLSPGG (127 aa)) form the N-terminal Ras-GEF domain. A Ras-GEF domain is found at 201–432 (ETEELAQHLT…YELSYAREPR (232 aa)). The 36-residue stretch at 466 to 501 (HVEQLVESVFKNYDPEGHGSISLEDFEKLSANFPFA) folds into the EF-hand domain. The Phorbol-ester/DAG-type zinc finger occupies 540–595 (LHAFQEVTFRKPTFCHSCNGFVSTGPLWGVTKRGYRCQDCGLCCHRHCRDQVRVEC). 2 disordered regions span residues 598-620 (RPET…LPPT) and 651-678 (SSHS…KSSV). Over residues 605–619 (PGPPGAPGPATPLPP) the composition is skewed to pro residues.

Belongs to the RASGRP family. In terms of tissue distribution, expressed by mast cells and their progenitors (at protein level).

It is found in the cytoplasm. The protein resides in the cell membrane. Functions as a cation- and diacylglycerol (DAG)-regulated nucleotide exchange factor activating Ras through the exchange of bound GDP for GTP. In neutrophils, participates in a phospholipase C-activating N-formyl peptide-activated GPCR (G protein-coupled receptor) signaling pathway by promoting Ras-mediated activation of PIK3CG/PI3Kgamma to promote neutrophil functional responses. In CD117(+) dendritic cells and mast cells, participates in an lipopolysaccharide (LPS)-activated signaling pathway that stimulates the production of interferon-gamma and other pro-inflammatory cytokines by natural killer (NK) cells. May function in mast cell differentiation. Does not appear to be required for the development of B-cells, DC-cells, T-cells, or NK-cells. The polypeptide is RAS guanyl-releasing protein 4 (Rasgrp4) (Rattus norvegicus (Rat)).